We begin with the raw amino-acid sequence, 1043 residues long: MTADEVGKNSFAKKEEQVLKFWKDNQIFEKSLQNRQGKTLYSFYDGPPFATGLPHYGHLLASTIKDVVGRYATMDGYYVPRRFGWDCHGVPVEYEVEKSLSLTAPGAIEDFGIASFNEECRKIVFRYVHEWEYYINRIGRWVDFSSTWKTMDASFMESVWWVFQSLYNQGLVYEGTKVVPFSTALGTPLSNFEASQNYKEVDDPSLVVRMPLQNDSASLLVWTTTPWTLPSNMAIAVGETLVYVRIQDKKSGEQWILSQGCVSRWFSNPEEFVILESFSGKDLVGRTYEPPFTFFQSKREEGAFRVIAASFVEESEGTGVVHMAPAFGEGDFLVCKENHVPLVCPVDAHGSFTEEIPQYQGQYIKHADKEIIKFLKKEGRIFYHGTVKHRYPFCWRTDTPLIYKAVNSWFVAVEKIKDKMLRANSSIHWVPEHIQEGRFGKWLEGARDWAISRNRYWGTPIPIWKSADGEILVVGSIRELEELTGTQITDIHRHFIDDLNIVKDGKPFHRIPYVFDCWFDSGAMPYAQNHYPFENQKETEEAFPADFIAEGLDQTRGWFYTLTVISAILFDRPAFRNAIVNGIILAEDGNKMSKRLNNYPSPKYVLDTYGADALRLYLLHSVVVKAEDLRFSDKGIEGVLKQILLPLTNVLSFFNTYAELYGFDPKSQDIEPAYTEIDQWILSNLYSVVGKVRESMSQYHLNFAVEPFVTFIDDLTNWYIRRCRRRFWEAEDTPDRRAAFSTLYEVLTVFCKVIAPFVPFLAEDIYQKLKLEKEPESVHLCDFPQVEMDKILPDLEKRMHDIREIVGLGHSLRKEHKLKVRQPLANFYVVGSKDRLSLLKTFEGLIAEELNVKNVIFYEEAPSFIYTTVKPNFRMLGKKVGSKMKEVQKALSELPNNAIDKLIQEETWVLTIDDREIALDGDDVVICRHTDPGYIARSSALFSVILDCQLREPLIVEGIARELVNKINTMRRNQQLHVSDRIALRIKTTEAVHRAFLDYENYICEETLIIAYDFTQDSDFQGENWDINGHATQIEITVSSIDS.

The 'HIGH' region signature appears at 48-58 (PFATGLPHYGH). The short motif at 591 to 595 (KMSKR) is the 'KMSKS' region element. Lys-594 contacts ATP.

The protein belongs to the class-I aminoacyl-tRNA synthetase family. IleS type 2 subfamily. As to quaternary structure, monomer. Requires Zn(2+) as cofactor.

It localises to the cytoplasm. The catalysed reaction is tRNA(Ile) + L-isoleucine + ATP = L-isoleucyl-tRNA(Ile) + AMP + diphosphate. In terms of biological role, catalyzes the attachment of isoleucine to tRNA(Ile). As IleRS can inadvertently accommodate and process structurally similar amino acids such as valine, to avoid such errors it has two additional distinct tRNA(Ile)-dependent editing activities. One activity is designated as 'pretransfer' editing and involves the hydrolysis of activated Val-AMP. The other activity is designated 'posttransfer' editing and involves deacylation of mischarged Val-tRNA(Ile). In Chlamydia pneumoniae (Chlamydophila pneumoniae), this protein is Isoleucine--tRNA ligase.